A 938-amino-acid polypeptide reads, in one-letter code: LPS-assembly protein LptD (938 aa).

Positions 1–33 are cleaved as a signal peptide; the sequence is MAVKHPAFRKKFPLLVTGSLLALQPAFSLQSFA. Residues 52–96 are disordered; that stretch reads KTATSALPPRPQHSRSAVSTTSGSATATATKQEPAPVLVTESKGR. The span at 65 to 81 shows a compositional bias: low complexity; the sequence is SRSAVSTTSGSATATAT.

The protein belongs to the LptD family. Component of the lipopolysaccharide transport and assembly complex. Interacts with LptE and LptA.

Its subcellular location is the cell outer membrane. Its function is as follows. Together with LptE, is involved in the assembly of lipopolysaccharide (LPS) at the surface of the outer membrane. The protein is LPS-assembly protein LptD of Ectopseudomonas mendocina (strain ymp) (Pseudomonas mendocina).